Reading from the N-terminus, the 143-residue chain is Nucleoside diphosphate kinase (143 aa).

ATP contacts are provided by Lys-11, Phe-59, Arg-87, Thr-93, Arg-104, and Asn-114. Residue His-117 is the Pros-phosphohistidine intermediate of the active site.

Belongs to the NDK family. In terms of assembly, homotetramer. Requires Mg(2+) as cofactor.

The protein localises to the cytoplasm. The enzyme catalyses a 2'-deoxyribonucleoside 5'-diphosphate + ATP = a 2'-deoxyribonucleoside 5'-triphosphate + ADP. The catalysed reaction is a ribonucleoside 5'-diphosphate + ATP = a ribonucleoside 5'-triphosphate + ADP. Functionally, major role in the synthesis of nucleoside triphosphates other than ATP. The ATP gamma phosphate is transferred to the NDP beta phosphate via a ping-pong mechanism, using a phosphorylated active-site intermediate. The protein is Nucleoside diphosphate kinase of Azotobacter vinelandii (strain DJ / ATCC BAA-1303).